Consider the following 492-residue polypeptide: Ketol-acid reductoisomerase (NADP(+)) (492 aa).

The KARI N-terminal Rossmann domain occupies 15–208 (AQLGKCRFMA…GGDRAGVLES (194 aa)). Residues 45 to 48 (CGAQ), Arg-68, Arg-76, Ser-78, and 108 to 110 (DKQ) contribute to the NADP(+) site. Residue His-132 is part of the active site. Gly-158 is a binding site for NADP(+). KARI C-terminal knotted domains lie at 209–344 (SFVA…KAPP) and 345–485 (FEGK…MTDM). 4 residues coordinate Mg(2+): Asp-217, Glu-221, Glu-389, and Glu-393. Residue Ser-414 participates in substrate binding.

The protein belongs to the ketol-acid reductoisomerase family. Mg(2+) serves as cofactor.

It catalyses the reaction (2R)-2,3-dihydroxy-3-methylbutanoate + NADP(+) = (2S)-2-acetolactate + NADPH + H(+). The catalysed reaction is (2R,3R)-2,3-dihydroxy-3-methylpentanoate + NADP(+) = (S)-2-ethyl-2-hydroxy-3-oxobutanoate + NADPH + H(+). The protein operates within amino-acid biosynthesis; L-isoleucine biosynthesis; L-isoleucine from 2-oxobutanoate: step 2/4. It participates in amino-acid biosynthesis; L-valine biosynthesis; L-valine from pyruvate: step 2/4. Functionally, involved in the biosynthesis of branched-chain amino acids (BCAA). Catalyzes an alkyl-migration followed by a ketol-acid reduction of (S)-2-acetolactate (S2AL) to yield (R)-2,3-dihydroxy-isovalerate. In the isomerase reaction, S2AL is rearranged via a Mg-dependent methyl migration to produce 3-hydroxy-3-methyl-2-ketobutyrate (HMKB). In the reductase reaction, this 2-ketoacid undergoes a metal-dependent reduction by NADPH to yield (R)-2,3-dihydroxy-isovalerate. The polypeptide is Ketol-acid reductoisomerase (NADP(+)) (Edwardsiella ictaluri (strain 93-146)).